The chain runs to 637 residues: Chaperone protein HtpG (637 aa).

Residues methionine 1–arginine 338 are a; substrate-binding. Positions glutamate 339–arginine 558 are b. Positions lysine 493–glycine 512 are disordered. The c stretch occupies residues phenylalanine 559–isoleucine 637.

This sequence belongs to the heat shock protein 90 family. As to quaternary structure, homodimer.

The protein resides in the cytoplasm. Functionally, molecular chaperone. Has ATPase activity. This is Chaperone protein HtpG from Wolbachia sp. subsp. Brugia malayi (strain TRS).